The primary structure comprises 688 residues: Acyl-CoA synthetase short-chain family member B, mitochondrial (688 aa).

Belongs to the ATP-dependent AMP-binding enzyme family.

The protein resides in the mitochondrion. The catalysed reaction is acetate + ATP + CoA = acetyl-CoA + AMP + diphosphate. In terms of biological role, activates acetate so that it can be used for lipid synthesis or for energy generation. This is Acyl-CoA synthetase short-chain family member B, mitochondrial (aslB) from Dictyostelium discoideum (Social amoeba).